The following is an 89-amino-acid chain: Protein S100-A6 (89 aa).

2 EF-hand domains span residues 12 to 47 (LVAI…IGSK) and 48 to 83 (LQDA…LALI). Ca(2+) is bound by residues Thr28 and Glu33. Lys40 carries the N6-acetyllysine modification. At Ser46 the chain carries Phosphoserine. N6-acetyllysine; alternate is present on Lys47. The residue at position 47 (Lys47) is an N6-succinyllysine; alternate. Ca(2+) contacts are provided by Asp61, Asn63, Asp65, Glu67, and Glu72.

This sequence belongs to the S-100 family. In terms of assembly, homodimer; head to tail assembly of 2 subunits. Interacts with CACYBP in a calcium-dependent manner. Interacts with ANXA2 and ANXA11 (via N-terminus). Interacts with SUGT1. Interacts with TP53; has higher affinity for TP53 that is phosphorylated on its N-terminal domain, and lower affinity for TP53 that is phosphorylated on its C-terminal domain. Interacts with tropomyosin. Interacts with FKBP4. Interacts with PPP5C (via TPR repeats); the interaction is calcium-dependent and modulates PPP5C activity. Interacts with TPPP; this interaction inhibits TPPP dimerization.

The protein localises to the nucleus envelope. The protein resides in the cytoplasm. Its subcellular location is the cell membrane. Functionally, may function as calcium sensor and modulator, contributing to cellular calcium signaling. May function by interacting with other proteins, such as TPR-containing proteins, and indirectly play a role in many physiological processes such as the reorganization of the actin cytoskeleton and in cell motility. Binds 2 calcium ions. Calcium binding is cooperative. This Mus musculus (Mouse) protein is Protein S100-A6 (S100a6).